A 277-amino-acid polypeptide reads, in one-letter code: Large ribosomal subunit protein mL46 (277 aa).

N6-succinyllysine is present on Lys-217. At Lys-228 the chain carries N6-acetyllysine. Lys-246 carries the N6-succinyllysine modification.

It belongs to the mitochondrion-specific ribosomal protein mL46 family. In terms of assembly, component of the mitochondrial ribosome large subunit (39S) which comprises a 16S rRNA and about 50 distinct proteins.

It localises to the mitochondrion. The protein is Large ribosomal subunit protein mL46 (Mrpl46) of Rattus norvegicus (Rat).